Here is a 613-residue protein sequence, read N- to C-terminus: 9-cis-epoxycarotenoid dioxygenase NCED5, chloroplastic (613 aa).

Residues 1–15 show a composition bias toward polar residues; the sequence is MPTTFTPNSPASSCS. Residues 1 to 36 constitute a chloroplast transit peptide; it reads MPTTFTPNSPASSCSIHHRASPSRGARNSVRFTRPR. The segment at 1 to 62 is disordered; sequence MPTTFTPNSP…PPAYVPPPPP (62 aa). Positions 37-50 are enriched in low complexity; sequence AAAAATNSVLSAPS. The span at 51 to 62 shows a compositional bias: pro residues; sequence SVPPAYVPPPPP. 4 residues coordinate Fe cation: His-305, His-354, His-419, and His-600.

The protein belongs to the carotenoid oxygenase family. It depends on Fe(2+) as a cofactor.

It is found in the plastid. It localises to the chloroplast. The catalysed reaction is a 9-cis-epoxycarotenoid + O2 = a 12'-apo-carotenal + 2-cis,4-trans-xanthoxin. It catalyses the reaction 9-cis-violaxanthin + O2 = (3S,5R,6S)-5,6-epoxy-3-hydroxy-5,6-dihydro-12'-apo-beta-caroten-12'-al + 2-cis,4-trans-xanthoxin. The enzyme catalyses 9'-cis-neoxanthin + O2 = (3S,5R,6R)-3,5-dihydroxy-6,7-didehydro-5,6-dihydro-12'-apo-beta-caroten-12'-al + 2-cis,4-trans-xanthoxin. Its function is as follows. Has a 11,12(11',12') 9-cis epoxycarotenoid cleavage activity. Catalyzes the first step of abscisic-acid biosynthesis from carotenoids. This Oryza sativa subsp. japonica (Rice) protein is 9-cis-epoxycarotenoid dioxygenase NCED5, chloroplastic.